The chain runs to 102 residues: RNA-binding protein Hfq (102 aa).

The 60-residue stretch at 9–68 (DPFLNALRRERVPVSIYLVNGIKLQGQIESFDQFVILLKNTVSQMVYKHAISTVVPSRPV) folds into the Sm domain. Residues 63–102 (VPSRPVSHHSNNTGGGSNNYHHGSSPAPSSQPQQDSADAE) form a disordered region. Positions 70–102 (HHSNNTGGGSNNYHHGSSPAPSSQPQQDSADAE) are enriched in low complexity.

It belongs to the Hfq family. As to quaternary structure, homohexamer.

In terms of biological role, RNA chaperone that binds small regulatory RNA (sRNAs) and mRNAs to facilitate mRNA translational regulation in response to envelope stress, environmental stress and changes in metabolite concentrations. Also binds with high specificity to tRNAs. This Erwinia tasmaniensis (strain DSM 17950 / CFBP 7177 / CIP 109463 / NCPPB 4357 / Et1/99) protein is RNA-binding protein Hfq.